The sequence spans 123 residues: Small ribosomal subunit protein uS12 (123 aa).

A disordered region spans residues 1–47 (MPTINQLVRKGRKKAEKKQSTPALKGGPQKRGVCTRVYTSTPKKPNS). Asp-89 bears the 3-methylthioaspartic acid mark.

It belongs to the universal ribosomal protein uS12 family. Part of the 30S ribosomal subunit. Contacts proteins S8 and S17. May interact with IF1 in the 30S initiation complex.

With S4 and S5 plays an important role in translational accuracy. Functionally, interacts with and stabilizes bases of the 16S rRNA that are involved in tRNA selection in the A site and with the mRNA backbone. Located at the interface of the 30S and 50S subunits, it traverses the body of the 30S subunit contacting proteins on the other side and probably holding the rRNA structure together. The combined cluster of proteins S8, S12 and S17 appears to hold together the shoulder and platform of the 30S subunit. In Desulforapulum autotrophicum (strain ATCC 43914 / DSM 3382 / VKM B-1955 / HRM2) (Desulfobacterium autotrophicum), this protein is Small ribosomal subunit protein uS12.